Here is a 307-residue protein sequence, read N- to C-terminus: Putative gluconeogenesis factor (307 aa).

This sequence belongs to the gluconeogenesis factor family.

It localises to the cytoplasm. Functionally, required for morphogenesis under gluconeogenic growth conditions. This is Putative gluconeogenesis factor from Yersinia pestis.